The primary structure comprises 645 residues: Cilia- and flagella-associated protein 221 homolog (645 aa).

A disordered region spans residues 381-408 (GGAVHQPSAPVGSSSSGGGGGSDPAFKP). Residues 428–435 (THQRLQRR) are interaction with calmodulin.

It belongs to the PCDP1 family. As to quaternary structure, interacts with calmodulin; calcium-dependent. Part of the PDCP1 complex composed of CFAP46, CFAP54, CFAP74 and CFAP221; the PDCP1 complex binds calmodulin.

The protein localises to the cytoplasm. It localises to the cytoskeleton. The protein resides in the cilium axoneme. In terms of biological role, may play a role in cilium morphogenesis. In Chlamydomonas reinhardtii (Chlamydomonas smithii), this protein is Cilia- and flagella-associated protein 221 homolog.